Reading from the N-terminus, the 220-residue chain is MHIMEGFLPPRWAAAWTLAAAPIVVYGAKQTIDIIRQDARVKALVAIGIAFVFILSALKFPSVTGSTSHPTGTGLLVVLFGPAVTAFTATIVLLYQALLLAHGGITTLGANVVAMGIIGPTVGWTAYQIIRPYTSLERATFIAAVLTDWTTYLVTSLQLGAAFPAGDGLDAIIISALDFAAIFTLTQVPIGILEGILAAAVIGYLTRLGSETIESLEVAA.

5 helical membrane-spanning segments follow: residues 6–26 (GFLPPRWAAAWTLAAAPIVVY), 43–63 (ALVAIGIAFVFILSALKFPSV), 74–94 (GLLVVLFGPAVTAFTATIVLL), 98–118 (LLLAHGGITTLGANVVAMGII), and 182–202 (IFTLTQVPIGILEGILAAAVI).

It belongs to the CbiM family. Forms an energy-coupling factor (ECF) transporter complex composed of an ATP-binding protein (A component, CbiO), a transmembrane protein (T component, CbiQ) and 2 possible substrate-capture proteins (S components, CbiM and CbiN) of unknown stoichimetry.

The protein resides in the cell membrane. It functions in the pathway cofactor biosynthesis; adenosylcobalamin biosynthesis. Functionally, part of the energy-coupling factor (ECF) transporter complex CbiMNOQ involved in cobalt import. The protein is Putative cobalt transport protein CbiM of Haloquadratum walsbyi (strain DSM 16790 / HBSQ001).